A 405-amino-acid polypeptide reads, in one-letter code: Tryptophan synthase beta chain (405 aa).

Position 98 is an N6-(pyridoxal phosphate)lysine (Lys98).

Belongs to the TrpB family. Tetramer of two alpha and two beta chains. Pyridoxal 5'-phosphate serves as cofactor.

The enzyme catalyses (1S,2R)-1-C-(indol-3-yl)glycerol 3-phosphate + L-serine = D-glyceraldehyde 3-phosphate + L-tryptophan + H2O. Its pathway is amino-acid biosynthesis; L-tryptophan biosynthesis; L-tryptophan from chorismate: step 5/5. The beta subunit is responsible for the synthesis of L-tryptophan from indole and L-serine. This Bradyrhizobium diazoefficiens (strain JCM 10833 / BCRC 13528 / IAM 13628 / NBRC 14792 / USDA 110) protein is Tryptophan synthase beta chain.